A 180-amino-acid polypeptide reads, in one-letter code: Large ribosomal subunit protein eL18 (180 aa).

Positions 152 to 180 are disordered; the sequence is FGPAPGVPGSHTKPYVISKSRERTNAHRA. Basic and acidic residues predominate over residues 170 to 180; it reads KSRERTNAHRA.

It belongs to the eukaryotic ribosomal protein eL18 family.

Its subcellular location is the cytoplasm. The polypeptide is Large ribosomal subunit protein eL18 (RPL18) (Taenia asiatica (Asian tapeworm)).